A 263-amino-acid chain; its full sequence is Pyrroline-5-carboxylate reductase (263 aa).

It belongs to the pyrroline-5-carboxylate reductase family.

The protein localises to the cytoplasm. It catalyses the reaction L-proline + NADP(+) = (S)-1-pyrroline-5-carboxylate + NADPH + 2 H(+). It carries out the reaction L-proline + NAD(+) = (S)-1-pyrroline-5-carboxylate + NADH + 2 H(+). The protein operates within amino-acid biosynthesis; L-proline biosynthesis; L-proline from L-glutamate 5-semialdehyde: step 1/1. Catalyzes the reduction of 1-pyrroline-5-carboxylate (PCA) to L-proline. In Treponema pallidum (strain Nichols), this protein is Pyrroline-5-carboxylate reductase.